Here is a 529-residue protein sequence, read N- to C-terminus: Structure-specific endonuclease subunit SLX1 homolog 1 (529 aa).

The GIY-YIG domain maps to 4 to 89; sequence RFHCVYLLTS…PTKSTRLKTQ (86 aa). An SLX1-type zinc finger spans residues 231–364; that stretch reads CALCSLPLRS…PCQPCPCPLC (134 aa). Disordered stretches follow at residues 275–305, 409–437, and 470–501; these read VTMG…MDAH, NSSL…YCGD, and SVSL…RMTD. A compositionally biased stretch (basic and acidic residues) spans 282 to 297; it reads RNERSGEYSNKIKDDS.

It belongs to the SLX1 family. As to quaternary structure, forms a heterodimer with a member of the SLX4 family. A divalent metal cation is required as a cofactor.

The protein resides in the nucleus. Functionally, catalytic subunit of a heterodimeric structure-specific endonuclease that resolves DNA secondary structures generated during DNA repair and recombination. Has endonuclease activity towards branched DNA substrates, introducing single-strand cuts in duplex DNA close to junctions with ss-DNA. The polypeptide is Structure-specific endonuclease subunit SLX1 homolog 1 (Trypanosoma cruzi (strain CL Brener)).